A 277-amino-acid chain; its full sequence is MWPGILVGGARVASCRYPALGPRLAAHFPAQRPPQRTLQNGLALQRCLHATATRALPLIPIVVEQTGRGERAYDIYSRLLRERIVCVMGPIDDSVASLVIAQLLFLQSESNKKPIHMYINSPGGVVTAGLAIYDTMQYILNPICTWCVGQAASMGSLLLAAGTPGMRHSLPNSRIMIHQPSGGARGQATDIAIQAEEIMKLKKQLYNIYAKHTKQSLQVIESAMERDRYMSPMEAQEFGILDKVLVHPPQDGEDEPTLVQKEPVEAAPAAEPVPAST.

Residues 1–56 (MWPGILVGGARVASCRYPALGPRLAAHFPAQRPPQRTLQNGLALQRCLHATATRAL) constitute a mitochondrion transit peptide. Serine 153 acts as the Nucleophile in catalysis. The active site involves histidine 178. Residue lysine 200 is modified to N6-succinyllysine. Residue lysine 211 is modified to N6-acetyllysine. The disordered stretch occupies residues 246-277 (VHPPQDGEDEPTLVQKEPVEAAPAAEPVPAST). Residues 265–277 (EAAPAAEPVPAST) show a composition bias toward low complexity.

The protein belongs to the peptidase S14 family. In terms of assembly, fourteen CLPP subunits assemble into 2 heptameric rings which stack back to back to give a disk-like structure with a central cavity. Component of the ClpXP complex formed by the assembly of two CLPP heptameric rings with two CLPX hexameric rings, giving rise to a symmetrical structure with two central CLPP rings flanked by a CLPX ring at either end of the complex. Detected in liver (at protein level). Predominantly expressed in skeletal muscle. Intermediate levels in heart, liver and pancreas. Low in brain, placenta, lung and kidney.

The protein localises to the mitochondrion matrix. The catalysed reaction is Hydrolysis of proteins to small peptides in the presence of ATP and magnesium. alpha-casein is the usual test substrate. In the absence of ATP, only oligopeptides shorter than five residues are hydrolyzed (such as succinyl-Leu-Tyr-|-NHMec, and Leu-Tyr-Leu-|-Tyr-Trp, in which cleavage of the -Tyr-|-Leu- and -Tyr-|-Trp bonds also occurs).. Functionally, protease component of the ClpXP complex that cleaves peptides and various proteins in an ATP-dependent process. Has low peptidase activity in the absence of CLPX. The ClpXP complex can degrade CSN1S1, CSN2 and CSN3, as well as synthetic peptides (in vitro) and may be responsible for a fairly general and central housekeeping function rather than for the degradation of specific substrates. Cleaves PINK1 in the mitochondrion. The chain is ATP-dependent Clp protease proteolytic subunit, mitochondrial from Homo sapiens (Human).